The primary structure comprises 548 residues: Druantia protein DruB (548 aa).

It is found in the cytoplasm. Its function is as follows. Component of antiviral defense system Druantia type I, composed of DruA, DruB, DruC, DruD and DruE. Expression of Druantia in E.coli (strain MG1655) confers resistance to phage lambda, SECphi18, SECphi27 and T4. The polypeptide is Druantia protein DruB (Escherichia coli (strain UMEA 4076-1)).